The sequence spans 210 residues: V-type ATP synthase subunit D (210 aa).

Belongs to the V-ATPase D subunit family.

In terms of biological role, produces ATP from ADP in the presence of a proton gradient across the membrane. This Coprothermobacter proteolyticus (strain ATCC 35245 / DSM 5265 / OCM 4 / BT) protein is V-type ATP synthase subunit D.